Reading from the N-terminus, the 479-residue chain is Bifunctional protein HldE (479 aa).

Residues 1–322 form a ribokinase region; that stretch reads MLAETQLAPI…AALERTAAQI (322 aa). Residue 198–201 participates in ATP binding; it reads NRRE. Residue Asp267 is part of the active site. The cytidylyltransferase stretch occupies residues 350–479; sequence FTNGCFDLVH…TSSLVAKART (130 aa).

It in the N-terminal section; belongs to the carbohydrate kinase PfkB family. In the C-terminal section; belongs to the cytidylyltransferase family. As to quaternary structure, homodimer.

The enzyme catalyses D-glycero-beta-D-manno-heptose 7-phosphate + ATP = D-glycero-beta-D-manno-heptose 1,7-bisphosphate + ADP + H(+). The catalysed reaction is D-glycero-beta-D-manno-heptose 1-phosphate + ATP + H(+) = ADP-D-glycero-beta-D-manno-heptose + diphosphate. It participates in nucleotide-sugar biosynthesis; ADP-L-glycero-beta-D-manno-heptose biosynthesis; ADP-L-glycero-beta-D-manno-heptose from D-glycero-beta-D-manno-heptose 7-phosphate: step 1/4. The protein operates within nucleotide-sugar biosynthesis; ADP-L-glycero-beta-D-manno-heptose biosynthesis; ADP-L-glycero-beta-D-manno-heptose from D-glycero-beta-D-manno-heptose 7-phosphate: step 3/4. Functionally, catalyzes the phosphorylation of D-glycero-D-manno-heptose 7-phosphate at the C-1 position to selectively form D-glycero-beta-D-manno-heptose-1,7-bisphosphate. Catalyzes the ADP transfer from ATP to D-glycero-beta-D-manno-heptose 1-phosphate, yielding ADP-D-glycero-beta-D-manno-heptose. The polypeptide is Bifunctional protein HldE (Azorhizobium caulinodans (strain ATCC 43989 / DSM 5975 / JCM 20966 / LMG 6465 / NBRC 14845 / NCIMB 13405 / ORS 571)).